We begin with the raw amino-acid sequence, 422 residues long: COUP transcription factor 1 (422 aa).

Residues 1-80 form a disordered region; it reads MAMVVSSWRD…QGPPGSGQSQ (80 aa). Positions 39–66 are enriched in low complexity; it reads EQQQAGSGAPHTPQTPGQPGAPATPGTQ. A DNA-binding region (nuclear receptor) is located at residues 82 to 157; the sequence is HIECVVCGDK…VGMRREAVQR (76 aa). 2 NR C4-type zinc fingers span residues 85–105 and 121–145; these read CVVC…CEGC and CRAN…LKKC. One can recognise an NR LBD domain in the interval 183–409; that stretch reads YLSGYISLLL…TLIRDMLLSG (227 aa). The tract at residues 343–422 is important for dimerization; it reads LQEKSQCALE…NWPYMSIQCS (80 aa).

Belongs to the nuclear hormone receptor family. NR2 subfamily. As to quaternary structure, binds DNA as dimer; homodimer and probable heterodimer with NR2F6. Interacts with GTF2B; this interaction is direct. Interacts with COPS2.

The protein localises to the nucleus. Coup (chicken ovalbumin upstream promoter) transcription factor binds to the ovalbumin promoter and, in conjunction with another protein (S300-II) stimulates initiation of transcription. Binds to both direct repeats and palindromes of the 5'-AGGTCA-3' motif. Represses transcriptional activity of LHCG. In Mus musculus (Mouse), this protein is COUP transcription factor 1 (Nr2f1).